The primary structure comprises 160 residues: MLIAIWAMTQEGLIGNNNTLPWMIKQELAHFKKTTLFQALLMGRKTYESLPKVFEKRTIFLLSKDQNYRFEEKGSEVKVINDFWPLIKSYQANKEKDLFICGGKSVYEQTINECDQLIVSIIKKKYKGDQFLKVDLSKFVLNEVVEFEEFNVNYYRKKQQ.

The DHFR domain maps to 1-160 (MLIAIWAMTQ…NVNYYRKKQQ (160 aa)). Residue 5–7 (IWA) participates in substrate binding. NADP(+) is bound by residues 6 to 7 (WA) and 14 to 19 (IGNNNT). E27 contacts substrate. An NADP(+)-binding site is contributed by 43–46 (GRKT). Position 57 (R57) interacts with substrate. NADP(+)-binding positions include 62–65 (LSKD) and 101–106 (CGGKSV). A substrate-binding site is contributed by S120.

It belongs to the dihydrofolate reductase family.

The catalysed reaction is (6S)-5,6,7,8-tetrahydrofolate + NADP(+) = 7,8-dihydrofolate + NADPH + H(+). It functions in the pathway cofactor biosynthesis; tetrahydrofolate biosynthesis; 5,6,7,8-tetrahydrofolate from 7,8-dihydrofolate: step 1/1. Its function is as follows. Key enzyme in folate metabolism. Catalyzes an essential reaction for de novo glycine and purine synthesis, and for DNA precursor synthesis. This is Dihydrofolate reductase (folA) from Mycoplasma genitalium (strain ATCC 33530 / DSM 19775 / NCTC 10195 / G37) (Mycoplasmoides genitalium).